A 291-amino-acid polypeptide reads, in one-letter code: tRNA-cytidine(32) 2-sulfurtransferase (291 aa).

A PP-loop motif motif is present at residues 36 to 41; that stretch reads SGGKDS. 3 residues coordinate [4Fe-4S] cluster: Cys-111, Cys-114, and Cys-202. The interval 259–291 is disordered; the sequence is DPWLDAEDEEAEDCGEPSAGDGVVSLGGARGGR. Residues 262-273 are compositionally biased toward acidic residues; that stretch reads LDAEDEEAEDCG.

It belongs to the TtcA family. As to quaternary structure, homodimer. Mg(2+) is required as a cofactor. It depends on [4Fe-4S] cluster as a cofactor.

It localises to the cytoplasm. It carries out the reaction cytidine(32) in tRNA + S-sulfanyl-L-cysteinyl-[cysteine desulfurase] + AH2 + ATP = 2-thiocytidine(32) in tRNA + L-cysteinyl-[cysteine desulfurase] + A + AMP + diphosphate + H(+). Its pathway is tRNA modification. Its function is as follows. Catalyzes the ATP-dependent 2-thiolation of cytidine in position 32 of tRNA, to form 2-thiocytidine (s(2)C32). The sulfur atoms are provided by the cysteine/cysteine desulfurase (IscS) system. The protein is tRNA-cytidine(32) 2-sulfurtransferase of Anaeromyxobacter sp. (strain K).